Reading from the N-terminus, the 246-residue chain is MTFTILPAVDVVNGQAVRLDQGEAGTEKSYGTPLESALKWQEQGAKWLHFVDLDAAFNRGSNHEMMAEIVGKLDVDVELTGGIRDDESLERALATGARRVNIGTAALEKPEWIASAIQRYGEKIAVDIAVRLEDGEWRTRGNGWVSDGGDLWEVLERLDSQGCARFVVTDVSKDGTLSGPNVELLREVAAATDAPIVASGGISVLEDVLELAKYQDEGIDSVIIGKALYEHKFTLEEALAAVEKLG.

The active-site Proton acceptor is the aspartate 10.

It belongs to the HisA/HisF family.

The protein resides in the cytoplasm. It carries out the reaction 1-(5-phospho-beta-D-ribosyl)-5-[(5-phospho-beta-D-ribosylamino)methylideneamino]imidazole-4-carboxamide = 5-[(5-phospho-1-deoxy-D-ribulos-1-ylimino)methylamino]-1-(5-phospho-beta-D-ribosyl)imidazole-4-carboxamide. Its pathway is amino-acid biosynthesis; L-histidine biosynthesis; L-histidine from 5-phospho-alpha-D-ribose 1-diphosphate: step 4/9. This is 1-(5-phosphoribosyl)-5-[(5-phosphoribosylamino)methylideneamino] imidazole-4-carboxamide isomerase (hisA) from Corynebacterium glutamicum (strain ATCC 13032 / DSM 20300 / JCM 1318 / BCRC 11384 / CCUG 27702 / LMG 3730 / NBRC 12168 / NCIMB 10025 / NRRL B-2784 / 534).